The chain runs to 207 residues: Cilia- and flagella-associated protein 418 (207 aa).

The interval Met1–His75 is required for interaction with FAM161A.

Interacts (via N-terminus) with FAM161A (via central region); the interaction is direct. Expressed in the retina (at protein level).

It is found in the cytoplasm. The protein resides in the photoreceptor inner segment. May be involved in photoreceptor outer segment disk morphogenesis. The polypeptide is Cilia- and flagella-associated protein 418 (CFAP418) (Bos taurus (Bovine)).